A 92-amino-acid polypeptide reads, in one-letter code: Large ribosomal subunit protein eL37 (92 aa).

Positions 19, 22, 34, and 37 each coordinate Zn(2+). Residues 19-37 (CRRCGRSSYHIQKSKCAQC) form a C4-type zinc finger.

It belongs to the eukaryotic ribosomal protein eL37 family. Requires Zn(2+) as cofactor.

Its function is as follows. Binds to the 23S rRNA. The protein is Large ribosomal subunit protein eL37 (RpL37) of Spodoptera frugiperda (Fall armyworm).